The sequence spans 329 residues: MKFSISSLKQVQPILCFKNKLSKVNVNSFLHPKEKVIFVMGATGSGKSRLAIDLATRFQGEIINSDKIQLYKGLDVLTNKVTPKECRGVPHHLLGVFDSEAGNLTATQYSRLASQAISKLSANNKLPIVAGGSNSYIEALVNHSSGFLLNNYDCCFIWVDVSLPVLNSFVSKRVDRMMEAGLLEEVREVFNPKANYSVGIRRAIGVPELHEYLRNESLVDRATKSKMLDVAVKNIKKNTEILACRQLKKIQRLHKKWKMSMHRVDATEVFLKRNVEEQDEAWENLVARPSERIVDKFYNNNNQLKNDDVEHCLAASYGGGSGSRAHNMI.

The transit peptide at 1-40 (MKFSISSLKQVQPILCFKNKLSKVNVNSFLHPKEKVIFVM) directs the protein to the mitochondrion. Position 41–48 (41–48 (GATGSGKS)) interacts with ATP.

It belongs to the IPP transferase family. As to expression, expressed in both the vascular stele and the phloem companion cells of the root, in endodermis of the root elongation zone, trichomes on young leaves, and some pollen tubes.

It is found in the mitochondrion. It catalyses the reaction dimethylallyl diphosphate + ADP = N(6)-(dimethylallyl)adenosine 5'-diphosphate + diphosphate. The enzyme catalyses dimethylallyl diphosphate + ATP = N(6)-(dimethylallyl)adenosine 5'-triphosphate + diphosphate. Functionally, involved in cytokinin biosynthesis. Catalyzes the transfer of an isopentenyl group from dimethylallyl diphosphate (DMAPP) to ATP and ADP. This Arabidopsis thaliana (Mouse-ear cress) protein is Adenylate isopentenyltransferase 7, mitochondrial (IPT7).